The chain runs to 888 residues: Valine--tRNA ligase (888 aa).

The short motif at 43 to 53 (PNVTGTLHLGH) is the 'HIGH' region element. The short motif at 538–542 (KMSKS) is the 'KMSKS' region element. Lys-541 is an ATP binding site. A coiled-coil region spans residues 821-888 (LIDLDAERAR…RLKAALGRLA (68 aa)).

Belongs to the class-I aminoacyl-tRNA synthetase family. ValS type 1 subfamily. As to quaternary structure, monomer.

Its subcellular location is the cytoplasm. It carries out the reaction tRNA(Val) + L-valine + ATP = L-valyl-tRNA(Val) + AMP + diphosphate. Its function is as follows. Catalyzes the attachment of valine to tRNA(Val). As ValRS can inadvertently accommodate and process structurally similar amino acids such as threonine, to avoid such errors, it has a 'posttransfer' editing activity that hydrolyzes mischarged Thr-tRNA(Val) in a tRNA-dependent manner. This Gluconobacter oxydans (strain 621H) (Gluconobacter suboxydans) protein is Valine--tRNA ligase.